Here is a 218-residue protein sequence, read N- to C-terminus: Glutathione S-transferase Mu 2 (218 aa).

The region spanning 2 to 88 (PMTLGYWDIR…YLARKHNLCG (87 aa)) is the GST N-terminal domain. Residue 7-8 (YW) coordinates glutathione. 2 positions are modified to phosphoserine: serine 27 and serine 44. Residues 43–46 (RSQW), lysine 50, 59–60 (NL), and 72–73 (QS) contribute to the glutathione site. The GST C-terminal domain occupies 90–208 (TEEERIRVDI…KSSRFLSKPI (119 aa)). A substrate-binding site is contributed by tyrosine 116. Serine 117 is modified (phosphoserine).

Belongs to the GST superfamily. Mu family. In terms of assembly, homodimer.

The protein resides in the cytoplasm. The catalysed reaction is RX + glutathione = an S-substituted glutathione + a halide anion + H(+). It catalyses the reaction 11(S)-hydroxy-14(S),15(S)-epoxy-(5Z,8Z,12E)-eicosatrienoate + glutathione = (11S,15S)-dihydroxy-14(R)-S-glutathionyl-(5Z,8Z,12E)-eicosatrienoate. Functionally, conjugation of reduced glutathione to a wide number of exogenous and endogenous hydrophobic electrophiles. Participates in the formation of novel hepoxilin regioisomers. The chain is Glutathione S-transferase Mu 2 from Mus musculus (Mouse).